Consider the following 121-residue polypeptide: Large ribosomal subunit protein uL24 (121 aa).

Belongs to the universal ribosomal protein uL24 family. As to quaternary structure, part of the 50S ribosomal subunit.

Functionally, one of two assembly initiator proteins, it binds directly to the 5'-end of the 23S rRNA, where it nucleates assembly of the 50S subunit. Its function is as follows. Located at the polypeptide exit tunnel on the outside of the subunit. This Pyrococcus horikoshii (strain ATCC 700860 / DSM 12428 / JCM 9974 / NBRC 100139 / OT-3) protein is Large ribosomal subunit protein uL24.